Here is a 429-residue protein sequence, read N- to C-terminus: Light-independent protochlorophyllide reductase subunit N (429 aa).

Residues Cys32, Cys57, and Cys118 each coordinate [4Fe-4S] cluster.

It belongs to the BchN/ChlN family. As to quaternary structure, protochlorophyllide reductase is composed of three subunits; BchL, BchN and BchB. Forms a heterotetramer of two BchB and two BchN subunits. [4Fe-4S] cluster is required as a cofactor.

It catalyses the reaction chlorophyllide a + oxidized 2[4Fe-4S]-[ferredoxin] + 2 ADP + 2 phosphate = protochlorophyllide a + reduced 2[4Fe-4S]-[ferredoxin] + 2 ATP + 2 H2O. Its pathway is porphyrin-containing compound metabolism; bacteriochlorophyll biosynthesis (light-independent). In terms of biological role, component of the dark-operative protochlorophyllide reductase (DPOR) that uses Mg-ATP and reduced ferredoxin to reduce ring D of protochlorophyllide (Pchlide) to form chlorophyllide a (Chlide). This reaction is light-independent. The NB-protein (BchN-BchB) is the catalytic component of the complex. This is Light-independent protochlorophyllide reductase subunit N from Rhodopseudomonas palustris (strain ATCC BAA-98 / CGA009).